The primary structure comprises 120 residues: MSTSGMLFIFATFCPCFLSCCAFMSHWKLKDFSFRFLRMCGERSLVVCYPLKLLKQIRSLFSIAIGHLSLMLIEGSANLLSLEEISRTLLRILDFVGNKNMRTYLEVPLCRWHISQARPN.

A signal peptide spans 1–22 (MSTSGMLFIFATFCPCFLSCCA). Residues 23–59 (FMSHWKLKDFSFRFLRMCGERSLVVCYPLKLLKQIRS) are Extracellular-facing. The helical transmembrane segment at 60–80 (LFSIAIGHLSLMLIEGSANLL) threads the bilayer. Topologically, residues 81–120 (SLEEISRTLLRILDFVGNKNMRTYLEVPLCRWHISQARPN) are cytoplasmic.

The protein localises to the membrane. This is an uncharacterized protein from Schizosaccharomyces pombe (strain 972 / ATCC 24843) (Fission yeast).